The sequence spans 89 residues: Small ribosomal subunit protein uS15 (89 aa).

The tract at residues 1-23 (MSLGTEEKQNLINTHQVHPTDTG) is disordered. The segment covering 10-23 (NLINTHQVHPTDTG) has biased composition (polar residues).

This sequence belongs to the universal ribosomal protein uS15 family. As to quaternary structure, part of the 30S ribosomal subunit. Forms a bridge to the 50S subunit in the 70S ribosome, contacting the 23S rRNA.

Its function is as follows. One of the primary rRNA binding proteins, it binds directly to 16S rRNA where it helps nucleate assembly of the platform of the 30S subunit by binding and bridging several RNA helices of the 16S rRNA. Functionally, forms an intersubunit bridge (bridge B4) with the 23S rRNA of the 50S subunit in the ribosome. The chain is Small ribosomal subunit protein uS15 from Prochlorococcus marinus (strain NATL2A).